The chain runs to 370 residues: Glucan endo-1,3-beta-glucosidase, basic vacuolar isoform GLB (370 aa).

The first 32 residues, 1–32 (MSTSDKHNTPQMAAITLLGLLLVASTIEIAGA), serve as a signal peptide directing secretion. Gln-33 is subject to Pyrrolidone carboxylic acid. The active-site Proton donor is the Glu-128. Glu-273 serves as the catalytic Nucleophile. Positions 349-370 (VSGGVWDSSVETNATASLISEM) are cleaved as a propeptide — removed in mature form. An N-linked (GlcNAc...) asparagine glycan is attached at Asn-361.

Belongs to the glycosyl hydrolase 17 family. Is expressed primarily in epidermal cell of healthy plant, and following induction by ethylene, accumulates in mesophyll cells.

The protein resides in the vacuole. It catalyses the reaction Hydrolysis of (1-&gt;3)-beta-D-glucosidic linkages in (1-&gt;3)-beta-D-glucans.. Its function is as follows. Implicated in the defense of plants against pathogens. This is Glucan endo-1,3-beta-glucosidase, basic vacuolar isoform GLB from Nicotiana tabacum (Common tobacco).